The chain runs to 487 residues: Serine/threonine-protein kinase 4 (487 aa).

An N-acetylmethionine modification is found at methionine 1. Threonine 3 is modified (phosphothreonine). The Protein kinase domain occupies 30–281; the sequence is FDVLEKLGEG…ATQLLQHPFV (252 aa). ATP is bound by residues 36–44 and lysine 59; that span reads LGEGSYGSV. The active-site Proton acceptor is aspartate 149. Threonine 183 bears the Phosphothreonine; by autocatalysis mark. Residues serine 265 and serine 320 each carry the phosphoserine modification. Residues 289-327 adopt a coiled-coil conformation; sequence ILRDLINEAMDVKLKRQEAQQREVDQEEEENSEEDELDS. The interval 305-332 is disordered; the sequence is QEAQQREVDQEEEENSEEDELDSGTMVR. Over residues 313 to 326 the composition is skewed to acidic residues; that stretch reads DQEEEENSEEDELD. A phosphothreonine mark is found at threonine 340 and threonine 367. Threonine 387 carries the post-translational modification Phosphothreonine; by PKB/AKT1. 2 positions are modified to phosphoserine: serine 410 and serine 414. Tyrosine 433 bears the Phosphotyrosine mark. The SARAH domain maps to 433 to 480; that stretch reads YEFLKSWTVEDLQKRLLALDPMMEQEIEEIRQKYQSKRQPILDAIEAK.

The protein belongs to the protein kinase superfamily. STE Ser/Thr protein kinase family. STE20 subfamily. In terms of assembly, homodimer; mediated via the coiled-coil region. Interacts with NORE1, which inhibits autoactivation. Interacts with and stabilizes SAV1. Interacts with RASSF1. Interacts with FOXO3. Interacts with RASSF2 (via SARAH domain). Interacts with AR, PKB/AKT1, TNNI3 and SIRT1. Interacts with DLG5 (via PDZ domain 3). Interacts with MARK3 and SCRIB in the presence of DLG5. It depends on Mg(2+) as a cofactor. Autophosphorylated on serine and threonine residues. Phosphorylation at Thr-387 by PKB/AKT1, leads to inhibition of its: kinase activity, nuclear translocation and autophosphorylation at Thr-183. It also diminishes its cleavage by caspases and its ability to phosphorylate FOXO3. In terms of processing, proteolytically cleaved by caspase-3 during apoptosis at Asp-326 and Asp-349 resulting in a 37 kDa or a 39 kDa subunit respectively. The 39 kDa subunit is further cleaved into the 37 kDa form. Proteolytic cleavage results in kinase activation and nuclear translocation of the truncated form (MST1/N). It is less likely that cleavage at Asp-349 is a prerequisite for activation as this site is not conserved in the murine ortholog.

It localises to the cytoplasm. Its subcellular location is the nucleus. The catalysed reaction is L-seryl-[protein] + ATP = O-phospho-L-seryl-[protein] + ADP + H(+). The enzyme catalyses L-threonyl-[protein] + ATP = O-phospho-L-threonyl-[protein] + ADP + H(+). Inhibited by the C-terminal non-catalytic region. Activated by caspase-cleavage. Full activation also requires homodimerization and autophosphorylation of Thr-183. Activated by RASSF1 which acts by preventing its dephosphorylation. In terms of biological role, stress-activated, pro-apoptotic kinase which, following caspase-cleavage, enters the nucleus and induces chromatin condensation followed by internucleosomal DNA fragmentation. Key component of the Hippo signaling pathway which plays a pivotal role in organ size control and tumor suppression by restricting proliferation and promoting apoptosis. The core of this pathway is composed of a kinase cascade wherein STK3/MST2 and STK4/MST1, in complex with its regulatory protein SAV1, phosphorylates and activates LATS1/2 in complex with its regulatory protein MOB1, which in turn phosphorylates and inactivates YAP1 oncoprotein and WWTR1/TAZ. Phosphorylation of YAP1 by LATS2 inhibits its translocation into the nucleus to regulate cellular genes important for cell proliferation, cell death, and cell migration. STK3/MST2 and STK4/MST1 are required to repress proliferation of mature hepatocytes, to prevent activation of facultative adult liver stem cells (oval cells), and to inhibit tumor formation. Phosphorylates 'Ser-14' of histone H2B (H2BS14ph) during apoptosis. Phosphorylates FOXO3 upon oxidative stress, which results in its nuclear translocation and cell death initiation. Phosphorylates MOBKL1A, MOBKL1B and RASSF2. Phosphorylates TNNI3 (cardiac Tn-I) and alters its binding affinity to TNNC1 (cardiac Tn-C) and TNNT2 (cardiac Tn-T). Phosphorylates FOXO1 on 'Ser-212' and regulates its activation and stimulates transcription of PMAIP1 in a FOXO1-dependent manner. Phosphorylates SIRT1 and inhibits SIRT1-mediated p53/TP53 deacetylation, thereby promoting p53/TP53 dependent transcription and apoptosis upon DNA damage. Acts as an inhibitor of PKB/AKT1. Phosphorylates AR on 'Ser-650' and suppresses its activity by intersecting with PKB/AKT1 signaling and antagonizing formation of AR-chromatin complexes. This chain is Serine/threonine-protein kinase 4 (STK4), found in Bos taurus (Bovine).